Here is a 406-residue protein sequence, read N- to C-terminus: Leu/Ile/Val-binding protein homolog 5 (406 aa).

An N-terminal signal peptide occupies residues 1–29; the sequence is MIGTRLPAWTRVLACGVAGLSLMTISAKA.

This sequence belongs to the leucine-binding protein family.

Its function is as follows. Component of an amino-acid transport system. This is Leu/Ile/Val-binding protein homolog 5 from Brucella suis biovar 1 (strain 1330).